Here is a 336-residue protein sequence, read N- to C-terminus: F420-dependent glucose-6-phosphate dehydrogenase (336 aa).

D39 provides a ligand contact to coenzyme F420-(gamma-Glu)n. Catalysis depends on H40, which acts as the Proton donor. Coenzyme F420-(gamma-Glu)n is bound by residues T76 and 107-108 (TG). Catalysis depends on E109, which acts as the Proton acceptor. Residues N112, 177-178 (GG), and 180-181 (AV) contribute to the coenzyme F420-(gamma-Glu)n site. T195, K198, K259, and R283 together coordinate substrate.

This sequence belongs to the F420-dependent glucose-6-phosphate dehydrogenase family. In terms of assembly, homodimer.

The enzyme catalyses oxidized coenzyme F420-(gamma-L-Glu)(n) + D-glucose 6-phosphate + H(+) = 6-phospho-D-glucono-1,5-lactone + reduced coenzyme F420-(gamma-L-Glu)(n). Functionally, catalyzes the coenzyme F420-dependent oxidation of glucose 6-phosphate (G6P) to 6-phosphogluconolactone. Appears to have a role in resistance to oxidative stress, via its consumption of G6P that serves as a source of reducing power to combat oxidative stress in mycobacteria. More precisely, is likely involved in a F420-dependent anti-oxidant mechanism that protects M.tuberculosis against oxidative stress and bactericidal agents. In terms of biological role, is essential for the bioreductive activation of the bicyclic 4-nitroimidazole prodrug PA-824 (nitroimidazo-oxazine) developed for anti-tuberculosis therapy against both replicating and persistent bacteria. It does not interact directly with PA-824 but, rather, provides reduced F420 to the deazaflavin-dependent nitroreductase Ddn, which in turn activates PA-824. This Mycobacterium tuberculosis (strain CDC 1551 / Oshkosh) protein is F420-dependent glucose-6-phosphate dehydrogenase (fgd1).